The following is a 131-amino-acid chain: Probable ATP synthase subunit g 2, mitochondrial (131 aa).

Belongs to the ATPase g subunit family. Subunit of the F-type ATPase which has 2 components, CF(1) - the catalytic core - and CF(0) - the membrane proton channel.

Its subcellular location is the mitochondrion membrane. Mitochondrial membrane ATP synthase (F(1)F(0) ATP synthase or Complex V) produces ATP from ADP in the presence of a proton gradient across the membrane which is generated by electron transport complexes of the respiratory chain. F-type ATPases consist of two structural domains, F(1) - containing the extramembraneous catalytic core, and F(0) - containing the membrane proton channel, linked together by a central stalk and a peripheral stalk. During catalysis, ATP synthesis in the catalytic domain of F(1) is coupled via a rotary mechanism of the central stalk subunits to proton translocation. Part of the complex F(0) domain. Minor subunit located with subunit a in the membrane. This Caenorhabditis elegans protein is Probable ATP synthase subunit g 2, mitochondrial.